Consider the following 978-residue polypeptide: LRR receptor-like serine/threonine-protein kinase ER1 (978 aa).

The signal sequence occupies residues 1 to 24 (MTPAPAAASYRALVALLLVAVAVA). At 25-577 (DDGSTLLEIK…GHQQKPLISK (553 aa)) the chain is on the extracellular side. Residues asparagine 62 and asparagine 71 are each glycosylated (N-linked (GlcNAc...) asparagine). 20 LRR repeats span residues 66–87 (AVAALNLSGLNLGGEISPAVGR), 88–112 (LKGIVSIDLKSNGLSGQIPDEIGDC), 114–136 (SLKTLDLSFNSLDGDIPFSVSKL), 137–159 (KHIESLILKNNQLIGVIPSTLSQ), 160–184 (LPNLKILDLAQNKLSGEIPRLIYWN), 186–208 (VLQYLGLRGNNLEGSISPDICQL), 209–232 (TGLWYFDVKNNSLTGPIPETIGNC), 233–257 (TSFQVLDLSYNKLSGSIPFNIGFLQ), 259–278 (ATLSLQGNMFTGPIPSVIGL), 279–302 (MQALAVLDLSYNQLSGPIPSILGN), 304–327 (TYTEKLYMQGNKLTGPIPPELGNM), 328–350 (STLHYLELNDNQLSGFIPPEFGK), 352–375 (TGLFDLNLANNNFEGPIPDNISSC), 377–399 (NLNSFNAYGNRLNGTIPPSLHKL), 400–423 (ESMTYLNLSSNFLSGSIPIELSRI), 424–447 (NNLDTLDLSCNMITGPIPSTIGSL), 449–470 (HLLRLNLSNNGLVGFIPAEIGN), 471–494 (LRSIMEIDMSNNHLGGLIPQELGM), 496–518 (QNLMLLNLKNNNITGDVSSLMNC), and 519–543 (FSLNILNVSYNNLAGVVPTDNNFSR). 2 N-linked (GlcNAc...) asparagine glycosylation sites follow: asparagine 218 and asparagine 231. N-linked (GlcNAc...) asparagine glycosylation is found at asparagine 302 and asparagine 326. N-linked (GlcNAc...) asparagine glycosylation is found at asparagine 371, asparagine 389, and asparagine 406. The N-linked (GlcNAc...) asparagine glycan is linked to asparagine 454. N-linked (GlcNAc...) asparagine glycosylation is found at asparagine 507, asparagine 525, and asparagine 540. The chain crosses the membrane as a helical span at residues 578-598 (AAILGIAVGGLVILLMILVAV). The Cytoplasmic portion of the chain corresponds to 599 to 978 (CRPHSPPVFK…FGEVISQNTE (380 aa)). Positions 645–916 (LSEKYIIGYG…EVVRVLDCLV (272 aa)) constitute a Protein kinase domain. ATP contacts are provided by residues 651–659 (IGYGASSTV) and lysine 673. Residue aspartate 771 is the Proton acceptor of the active site.

Belongs to the protein kinase superfamily. Ser/Thr protein kinase family.

The protein localises to the cell membrane. It carries out the reaction L-seryl-[protein] + ATP = O-phospho-L-seryl-[protein] + ADP + H(+). It catalyses the reaction L-threonyl-[protein] + ATP = O-phospho-L-threonyl-[protein] + ADP + H(+). Functionally, receptor kinase involved in the regulation of thermotolerance. Functions as a positive regulator of heat tolerance. May be involved in the regulation of cell proliferation and cell growth. The chain is LRR receptor-like serine/threonine-protein kinase ER1 from Oryza sativa subsp. japonica (Rice).